A 398-amino-acid chain; its full sequence is Peptidyl-prolyl cis-trans isomerase D (398 aa).

In terms of domain architecture, PPIase cyclophilin-type spans F21–E185. TPR repeat units follow at residues G229–H262, T282–E323, and A335–D368.

Belongs to the cyclophilin-type PPIase family. PPIase D subfamily.

It localises to the cytoplasm. The enzyme catalyses [protein]-peptidylproline (omega=180) = [protein]-peptidylproline (omega=0). PPIases accelerate the folding of proteins. It catalyzes the cis-trans isomerization of proline imidic peptide bonds in oligopeptides. This is Peptidyl-prolyl cis-trans isomerase D (CPR6) from Mycosarcoma maydis (Corn smut fungus).